A 144-amino-acid polypeptide reads, in one-letter code: Probable DNA-directed RNA polymerases I and III subunit RPAC2 (144 aa).

The tract at residues 14 to 47 (KVEAETMEVDEQPQETPQVDDEEDLNVPSKKKME) is disordered. The span at 18 to 38 (ETMEVDEQPQETPQVDDEEDL) shows a compositional bias: acidic residues.

Belongs to the archaeal Rpo11/eukaryotic RPB11/RPC19 RNA polymerase subunit family. In terms of assembly, component of the RNA polymerase I (Pol I) and RNA polymerase III (Pol III) complexes consisting of at least 13 and 17 subunits, respectively.

The protein localises to the nucleus. Functionally, DNA-dependent RNA polymerase catalyzes the transcription of DNA into RNA using the four ribonucleoside triphosphates as substrates. Common core component of RNA polymerases I and III which synthesize ribosomal RNA precursors and small RNAs, such as 5S rRNA and tRNAs, respectively. The sequence is that of Probable DNA-directed RNA polymerases I and III subunit RPAC2 (rpac-19) from Caenorhabditis elegans.